A 522-amino-acid chain; its full sequence is MLNEILSGSSAAVISGLVGFYISKKITNANFDIYVEKAKAQAGAIENEAQLLLYKANIKSQEIEQEATKLYENAKDRAKADLSLREEDVNRKEQTFKRYKQNEERRLQDEVSTLKARQVDLKRNEKSLSSLKKRYEDKIDEALNAIEHCAGMTKEEATRVLLEKVEEKSRSEIAHVVRRYENEAKVEAKKRANYILAQATSRFAGEFAAERLTNLVHLNDDELKGRIIGKEGRNIKTLETLLGVDIIIDDTPNAILVSSFNLYRRAIATKTLELLIQDGRIQPARIEEIYNKVCEDFEADTLSEGEEIVIDLDIGVMHPELVKLIGKLRYRASYGQNALSHTLEVAHLAGIMASEMGGDARLAKRAGLLHDIGKALTHEHEGSHVDLGVQVCNRYNEHSVVINAIYAHHGHEEINSIECGAVCAADALSAARPGARREVLESFLKRVTAIEEIASQHSGVKQAYAINAGREVRVIVNASLINDDESILLAKEIASEIEHGVQYPGEIKVNVIRESRAVEFAK.

Residues 7–23 traverse the membrane as a helical segment; that stretch reads SGSSAAVISGLVGFYIS. The KH domain maps to 212–278; the sequence is LTNLVHLNDD…TKTLELLIQD (67 aa). Residues 338–431 enclose the HD domain; the sequence is ALSHTLEVAH…VCAADALSAA (94 aa).

Belongs to the RNase Y family.

Its subcellular location is the cell membrane. Its function is as follows. Endoribonuclease that initiates mRNA decay. This chain is Ribonuclease Y, found in Sulfurimonas denitrificans (strain ATCC 33889 / DSM 1251) (Thiomicrospira denitrificans (strain ATCC 33889 / DSM 1251)).